A 328-amino-acid polypeptide reads, in one-letter code: Malate dehydrogenase (328 aa).

11-17 (GAAGQIG) provides a ligand contact to NAD(+). The substrate site is built by Arg94 and Arg100. NAD(+) is bound by residues Asn107, Gln114, and 131–133 (VGN). Asn133 and Arg164 together coordinate substrate. His189 (proton acceptor) is an active-site residue.

Belongs to the LDH/MDH superfamily. MDH type 2 family.

The catalysed reaction is (S)-malate + NAD(+) = oxaloacetate + NADH + H(+). Functionally, catalyzes the reversible oxidation of malate to oxaloacetate. The sequence is that of Malate dehydrogenase from Xanthomonas axonopodis pv. citri (strain 306).